Reading from the N-terminus, the 72-residue chain is Translation initiation factor IF-1 (72 aa).

One can recognise an S1-like domain in the interval Met-1–Lys-72.

This sequence belongs to the IF-1 family. As to quaternary structure, component of the 30S ribosomal translation pre-initiation complex which assembles on the 30S ribosome in the order IF-2 and IF-3, IF-1 and N-formylmethionyl-tRNA(fMet); mRNA recruitment can occur at any time during PIC assembly.

It is found in the cytoplasm. In terms of biological role, one of the essential components for the initiation of protein synthesis. Stabilizes the binding of IF-2 and IF-3 on the 30S subunit to which N-formylmethionyl-tRNA(fMet) subsequently binds. Helps modulate mRNA selection, yielding the 30S pre-initiation complex (PIC). Upon addition of the 50S ribosomal subunit IF-1, IF-2 and IF-3 are released leaving the mature 70S translation initiation complex. This chain is Translation initiation factor IF-1, found in Caulobacter vibrioides (strain ATCC 19089 / CIP 103742 / CB 15) (Caulobacter crescentus).